The sequence spans 418 residues: Tryptophan synthase beta chain 1 (418 aa).

Residue Lys-99 is modified to N6-(pyridoxal phosphate)lysine.

The protein belongs to the TrpB family. In terms of assembly, tetramer of two alpha and two beta chains. It depends on pyridoxal 5'-phosphate as a cofactor.

It carries out the reaction (1S,2R)-1-C-(indol-3-yl)glycerol 3-phosphate + L-serine = D-glyceraldehyde 3-phosphate + L-tryptophan + H2O. It functions in the pathway amino-acid biosynthesis; L-tryptophan biosynthesis; L-tryptophan from chorismate: step 5/5. In terms of biological role, the beta subunit is responsible for the synthesis of L-tryptophan from indole and L-serine. In Corynebacterium efficiens (strain DSM 44549 / YS-314 / AJ 12310 / JCM 11189 / NBRC 100395), this protein is Tryptophan synthase beta chain 1 (trpB1).